We begin with the raw amino-acid sequence, 1241 residues long: Interphotoreceptor matrix proteoglycan 2 (1241 aa).

The N-terminal stretch at 1–28 (MIMFLPLGRISLGILILFLTGGNLVSVS) is a signal peptide. Residues 29-1104 (EEIQDRMHAV…CEEFVSEPFV (1076 aa)) are Extracellular-facing. Residue threonine 193 is glycosylated (O-linked (GalNAc...) threonine). The segment at 206-234 (AASERSAASPQESISNEIENVTEQPTPPA) is disordered. Over residues 211–229 (SAASPQESISNEIENVTEQ) the composition is skewed to polar residues. N-linked (GlcNAc...) asparagine glycosylation occurs at asparagine 225. A glycan (O-linked (GalNAc...) threonine) is linked at threonine 231. The SEA 1 domain occupies 235–349 (AEQIAEFSIQ…KPTAVYTISN (115 aa)). Positions 255–263 (RDPSSALYR) are hyaluronan-binding motif involved in chondroitin sulfate A-binding. 3 N-linked (GlcNAc...) asparagine glycosylation sites follow: asparagine 297, asparagine 316, and asparagine 366. O-linked (GalNAc...) threonine glycosylation is found at threonine 429, threonine 430, and threonine 431. The span at 431–443 (TISPFGFSSGPPS) shows a compositional bias: low complexity. Disordered stretches follow at residues 431–456 (TISP…STLG) and 500–520 (VAPE…TEES). Residue threonine 817 is glycosylated (O-linked (GalNAc...) threonine). 3 N-linked (GlcNAc...) asparagine glycosylation sites follow: asparagine 841, asparagine 945, and asparagine 959. The SEA 2 domain maps to 900 to 1013 (GALVVFFSLR…YSLDVESGDD (114 aa)). EGF-like domains are found at residues 1013-1054 (DANP…LPCQ) and 1055-1096 (SVCD…QHCE). 6 disulfide bridges follow: cysteine 1017–cysteine 1028, cysteine 1022–cysteine 1039, cysteine 1041–cysteine 1053, cysteine 1057–cysteine 1070, cysteine 1064–cysteine 1080, and cysteine 1082–cysteine 1095. The hyaluronan-binding motif involved in chondroitin sulfate C-binding stretch occupies residues 1083-1091 (RVGSNWWYR). A helical membrane pass occupies residues 1105-1125 (IGITIASVVSLLLVASAVVFF). Residues 1126–1241 (LAKMLQAQNV…FVREHEMEEL (116 aa)) are Cytoplasmic-facing. The interval 1128–1136 (KMLQAQNVR) is hyaluronan-binding motif involved in chondroitin sulfate A- and C-binding. Residues 1139-1145 (RQRPTNR) form a hyaluronan-binding motif involved in chondroitin sulfate C-binding region. The interval 1210–1218 (KEEIQERMR) is hyaluronan-binding motif involved in chondroitin sulfate A- and C-binding motif.

Expressed in the pineal gland and the outer layer of the retina.

It is found in the photoreceptor outer segment membrane. Its subcellular location is the photoreceptor inner segment membrane. The protein localises to the secreted. The protein resides in the extracellular space. It localises to the extracellular matrix. It is found in the interphotoreceptor matrix. Its function is as follows. Chondroitin sulfate- and hyaluronan-binding proteoglycan involved in the organization of interphotoreceptor matrix; may participate in the maturation and maintenance of the light-sensitive photoreceptor outer segment. Binds heparin. This is Interphotoreceptor matrix proteoglycan 2 (Impg2) from Rattus norvegicus (Rat).